Reading from the N-terminus, the 953-residue chain is Probable LRR receptor-like serine/threonine-protein kinase At1g53420 (953 aa).

A signal peptide spans 1 to 22; the sequence is MSLNRFLFTSFSFFLFFIVHFA. Over 23-566 the chain is Extracellular; that stretch reads SSATLPTQEG…SPRNGMSTGT (544 aa). 6 LRR repeats span residues 63 to 86, 88 to 110, 111 to 132, 135 to 158, 159 to 182, and 183 to 205; these read WSTISRNLKRENLQGSLPKELVGL, LLQEIDLSRNYLNGSIPPEWGVL, PLVNIWLLGNRLTGPIPKEFGN, TLTSLVLEANQLSGELPLELGNLP, NIQQMILSSNNFNGEIPSTFAKLT, and TLRDFRVSDNQLSGTIPDFIQKW. Residues asparagine 100 and asparagine 132 are each glycosylated (N-linked (GlcNAc...) asparagine). N-linked (GlcNAc...) asparagine glycosylation is found at asparagine 265, asparagine 315, asparagine 335, asparagine 378, and asparagine 423. The chain crosses the membrane as a helical span at residues 567-587; it reads LHTLVVILSIFIVFLVFGTLW. At 588–953 the chain is on the cytoplasmic side; the sequence is KKGYLRSKSQ…SDRSESSADH (366 aa). In terms of domain architecture, Protein kinase spans 624 to 901; that stretch reads FDSANRIGEG…VKMLEGKKMV (278 aa). ATP contacts are provided by residues 630–638 and lysine 652; that span reads IGEGGFGPV. Tyrosine 697 is modified (phosphotyrosine). Residue aspartate 750 is the Proton acceptor of the active site. Serine 783 carries the post-translational modification Phosphoserine. Phosphothreonine is present on residues threonine 784 and threonine 789. Tyrosine 797 is subject to Phosphotyrosine.

Belongs to the protein kinase superfamily. Ser/Thr protein kinase family.

The protein localises to the membrane. The enzyme catalyses L-seryl-[protein] + ATP = O-phospho-L-seryl-[protein] + ADP + H(+). It carries out the reaction L-threonyl-[protein] + ATP = O-phospho-L-threonyl-[protein] + ADP + H(+). This Arabidopsis thaliana (Mouse-ear cress) protein is Probable LRR receptor-like serine/threonine-protein kinase At1g53420.